Here is a 436-residue protein sequence, read N- to C-terminus: 3-ketoacyl-CoA thiolase (436 aa).

The active-site Acyl-thioester intermediate is cysteine 99. Active-site proton acceptor residues include histidine 392 and cysteine 422.

The protein belongs to the thiolase-like superfamily. Thiolase family. In terms of assembly, heterotetramer of two alpha chains (FadJ) and two beta chains (FadI).

Its subcellular location is the cytoplasm. The catalysed reaction is an acyl-CoA + acetyl-CoA = a 3-oxoacyl-CoA + CoA. The protein operates within lipid metabolism; fatty acid beta-oxidation. Catalyzes the final step of fatty acid oxidation in which acetyl-CoA is released and the CoA ester of a fatty acid two carbons shorter is formed. This Alteromonas mediterranea (strain DSM 17117 / CIP 110805 / LMG 28347 / Deep ecotype) protein is 3-ketoacyl-CoA thiolase.